Here is a 463-residue protein sequence, read N- to C-terminus: A-type ATP synthase subunit B (463 aa).

It belongs to the ATPase alpha/beta chains family. In terms of assembly, has multiple subunits with at least A(3), B(3), C, D, E, F, H, I and proteolipid K(x).

The protein localises to the cell membrane. Its function is as follows. Component of the A-type ATP synthase that produces ATP from ADP in the presence of a proton gradient across the membrane. The B chain is a regulatory subunit. The protein is A-type ATP synthase subunit B of Thermococcus sp. (strain KI).